A 406-amino-acid chain; its full sequence is Protein translocase subunit SecD (406 aa).

Helical transmembrane passes span Ile-8 to Asn-28, Met-240 to Ala-260, Phe-262 to Ile-282, Pro-289 to Phe-309, Phe-334 to Phe-354, and Gly-361 to Thr-381.

This sequence belongs to the SecD/SecF family. SecD subfamily. Forms a complex with SecF. Part of the essential Sec protein translocation apparatus which comprises SecA, SecYEG and auxiliary proteins SecDF. Other proteins may also be involved.

The protein localises to the cell inner membrane. Part of the Sec protein translocase complex. Interacts with the SecYEG preprotein conducting channel. SecDF uses the proton motive force (PMF) to complete protein translocation after the ATP-dependent function of SecA. In Sebaldella termitidis (strain ATCC 33386 / NCTC 11300), this protein is Protein translocase subunit SecD.